A 771-amino-acid chain; its full sequence is MKYSKLLLLLVSVVQALDVPRKPHAPTGEGSKRLTFNETVVKQAITPTSRSVQWLSGAEDGSYVYAAEDGSLTIENIVTNESRTLIPADKIPTGKEAFNYWIHPDLSSVLWASNHTKQYRHSFFADYYVQDVESLKSVPLMPDQEGDIQYAQWSPVGNTIAFVRENDLYVWDNGTVTRITDDGGPDMFHGVPDWIYEEEILGDRYALWFSPDGEYLAYLSFNETGVPTYTVQYYMDNQEIAPAYPWELKIRYPKVSQTNPTVTLSLLNIASKEVKQAPIDAFESTDLIIGEVAWLTDTHTTVAAKAFNRVQDQQKVVAVDTASNKATVISDRDGTDGWLDNLLSMKYIGPIKPSDKDAYYIDISDHSGWAHLYLFPVSGGEPIPLTKGDWEVTSILSIDQERQLVYYLSTQHHSTERHLYSVSYSTFAVTPLVDDTVAAYWSASFSANSGYYILTYGGPDVPYQELYTTNSTKPLRTITDNAKVLEQIKDYALPNITYFELPLPSGETLNVMQRLPPGFSPDKKYPILFTPYGGPGAQEVTKRWQALNFKAYVASDSELEYVTWTVDNRGTGFKGRKFRSAVTRQLGLLEAEDQIYAAQQAANIPWIDADHIGIWGWSFGGYLTSKVLEKDSGAFTLGVITAPVSDWRFYDSMYTERYMKTLSTNEEGYETSAVRKTDGFKNVEGGFLIQHGTGDDNVHFQNSAALVDLLMGDGVSPEKLHSQWFTDSDHGISYHGGGVFLYKQLARKLYQEKNRQTQVLMHQWTKKDLEE.

A signal peptide spans 1–16 (MKYSKLLLLLVSVVQA). Asn37, Asn80, Asn114, Asn173, Asn222, Asn470, and Asn495 each carry an N-linked (GlcNAc...) asparagine glycan. Residues Ser618, Asp695, and His730 each act as charge relay system in the active site.

Belongs to the peptidase S9B family.

It is found in the secreted. It carries out the reaction Release of an N-terminal dipeptide, Xaa-Yaa-|-Zaa-, from a polypeptide, preferentially when Yaa is Pro, provided Zaa is neither Pro nor hydroxyproline.. Its function is as follows. Extracellular dipeptidyl-peptidase which removes N-terminal dipeptides sequentially from polypeptides having unsubstituted N-termini provided that the penultimate residue is proline. The sequence is that of Probable dipeptidyl peptidase 4 (dpp4) from Aspergillus flavus (strain ATCC 200026 / FGSC A1120 / IAM 13836 / NRRL 3357 / JCM 12722 / SRRC 167).